Reading from the N-terminus, the 144-residue chain is Maximins 4/H3 type 2 (144 aa).

The first 18 residues, 1 to 18 (MNFKYIIAVSFFIASAYA), serve as a signal peptide directing secretion. Positions 19–43 (RRNEKDVQSLSQRDVLEEESLREIR) are excised as a propeptide. Asn-70 carries the asparagine amide modification. Positions 74–123 (TAEDHEVMKRLEAVMRDLDSLDHPEEASERETRGFNQEEIANLFTKKEKR) are excised as a propeptide. Ile-143 carries the isoleucine amide modification.

It belongs to the bombinin family. In terms of tissue distribution, expressed by the skin glands.

The protein resides in the secreted. In terms of biological role, maximin-4 shows antibacterial activity against both Gram-positive and Gram-negative bacteria. It also shows antimicrobial activity against the fungus C.albicans, but not against A.flavus nor P.uticale. It has little hemolytic activity. It does not possess a significant cytotoxicity against tumor cell lines. It does not possess a significant anti-HIV activity. Functionally, maximin-H3 shows antibacterial activity against both Gram-positive and Gram-negative bacteria. It also shows antimicrobial activity against the fungus C.albicans. Shows strong hemolytic activity. The polypeptide is Maximins 4/H3 type 2 (Bombina maxima (Giant fire-bellied toad)).